We begin with the raw amino-acid sequence, 387 residues long: S-adenosylmethionine synthase (387 aa).

H16 contacts ATP. Residue D18 participates in Mg(2+) binding. E44 is a K(+) binding site. Residues E57 and Q100 each contribute to the L-methionine site. Residues 100–110 (QSPDIAQGVDR) form a flexible loop region. ATP contacts are provided by residues 167 to 169 (DAK), 232 to 233 (RF), D241, 247 to 248 (RK), A264, and K268. D241 is an L-methionine binding site. K272 contacts L-methionine.

The protein belongs to the AdoMet synthase family. In terms of assembly, homotetramer; dimer of dimers. Mg(2+) serves as cofactor. The cofactor is K(+).

It localises to the cytoplasm. The enzyme catalyses L-methionine + ATP + H2O = S-adenosyl-L-methionine + phosphate + diphosphate. It functions in the pathway amino-acid biosynthesis; S-adenosyl-L-methionine biosynthesis; S-adenosyl-L-methionine from L-methionine: step 1/1. Catalyzes the formation of S-adenosylmethionine (AdoMet) from methionine and ATP. The overall synthetic reaction is composed of two sequential steps, AdoMet formation and the subsequent tripolyphosphate hydrolysis which occurs prior to release of AdoMet from the enzyme. The protein is S-adenosylmethionine synthase of Cupriavidus metallidurans (strain ATCC 43123 / DSM 2839 / NBRC 102507 / CH34) (Ralstonia metallidurans).